The following is a 363-amino-acid chain: Anhydro-N-acetylmuramic acid kinase (363 aa).

ATP is bound at residue 10 to 17 (GTSLDGLD).

Belongs to the anhydro-N-acetylmuramic acid kinase family.

The catalysed reaction is 1,6-anhydro-N-acetyl-beta-muramate + ATP + H2O = N-acetyl-D-muramate 6-phosphate + ADP + H(+). The protein operates within amino-sugar metabolism; 1,6-anhydro-N-acetylmuramate degradation. It functions in the pathway cell wall biogenesis; peptidoglycan recycling. Its function is as follows. Catalyzes the specific phosphorylation of 1,6-anhydro-N-acetylmuramic acid (anhMurNAc) with the simultaneous cleavage of the 1,6-anhydro ring, generating MurNAc-6-P. Is required for the utilization of anhMurNAc either imported from the medium or derived from its own cell wall murein, and thus plays a role in cell wall recycling. This is Anhydro-N-acetylmuramic acid kinase from Pseudomonas fluorescens (strain Pf0-1).